A 401-amino-acid polypeptide reads, in one-letter code: Decapping and exoribonuclease protein (401 aa).

The interval 1 to 27 (MEGNKSMQREKIDRPMKRGPEQNSLSP) is disordered. The segment covering 7–20 (MQREKIDRPMKRGP) has biased composition (basic and acidic residues). Substrate-binding positions include R69, E114, and 149–151 (WRG). Mg(2+) is bound at residue E210. 2 residues coordinate substrate: C235 and E252. Mg(2+) is bound by residues E252, D254, E271, and L272. K273 and Q298 together coordinate substrate.

Belongs to the DXO/Dom3Z family. Mg(2+) serves as cofactor.

It localises to the nucleus. The catalysed reaction is a 5'-end triphospho-ribonucleoside in mRNA + H2O = a 5'-end phospho-ribonucleoside in mRNA + diphosphate + H(+). It catalyses the reaction a 5'-end NAD(+)-phospho-ribonucleoside in mRNA + H2O = a 5'-end phospho-ribonucleoside in mRNA + NAD(+) + H(+). The enzyme catalyses a 5'-end NAD(+)-phospho-ribonucleoside in snoRNA + H2O = a 5'-end phospho-ribonucleoside in snoRNA + NAD(+) + H(+). It carries out the reaction a 5'-end (N(7)-methyl 5'-triphosphoguanosine)-ribonucleoside-ribonucleotide in mRNA + H2O = a (N(7)-methyl 5'-triphosphoguanosine)-nucleoside + a 5'-end phospho-ribonucleoside in mRNA + H(+). The catalysed reaction is a 5'-end FAD-phospho-ribonucleoside in mRNA + H2O = a 5'-end phospho-ribonucleoside in mRNA + FAD + H(+). It catalyses the reaction a 5'-end CoA-ribonucleoside in mRNA + H2O = 3'-dephospho-CoA + a 5'-end phospho-ribonucleoside in mRNA + H(+). Decapping enzyme for NAD-capped RNAs: specifically hydrolyzes the nicotinamide adenine dinucleotide (NAD) cap from a subset of RNAs by removing the entire NAD moiety from the 5'-end of an NAD-capped RNA. The NAD-cap is present at the 5'-end of some RNAs and snoRNAs. In contrast to the canonical 5'-end N7 methylguanosine (m7G) cap, the NAD cap promotes mRNA decay. Also acts as a non-canonical decapping enzyme that removes the entire cap structure of m7G capped or incompletely capped RNAs and mediates their subsequent degradation. Specifically degrades pre-mRNAs with a defective 5'-end m7G cap and is part of a pre-mRNA capping quality control. Has decapping activity toward incomplete 5'-end m7G cap mRNAs such as unmethylated 5'-end-capped RNA (cap0), while it has no activity toward 2'-O-ribose methylated m7G cap (cap1). Also has 5'-3' exoribonuclease activities: The 5'-end monophosphate RNA is then degraded by the 5'-3' exoribonuclease activity, enabling this enzyme to decap and degrade incompletely capped mRNAs. Also possesses RNA 5'-pyrophosphohydrolase activity by hydrolyzing the 5'-end triphosphate to release pyrophosphates. Exhibits decapping activity towards FAD-capped RNAs. Exhibits decapping activity towards dpCoA-capped RNAs in vitro. The protein is Decapping and exoribonuclease protein of Xenopus laevis (African clawed frog).